A 314-amino-acid chain; its full sequence is 2,3-dihydroxyphenylpropionate/2,3-dihydroxicinnamic acid 1,2-dioxygenase (314 aa).

The active-site Proton donor is His115. His179 acts as the Proton acceptor in catalysis.

This sequence belongs to the LigB/MhpB extradiol dioxygenase family. As to quaternary structure, homotetramer. Requires Fe(2+) as cofactor.

The catalysed reaction is 3-(2,3-dihydroxyphenyl)propanoate + O2 = (2Z,4E)-2-hydroxy-6-oxonona-2,4-dienedioate + H(+). The enzyme catalyses (2E)-3-(2,3-dihydroxyphenyl)prop-2-enoate + O2 = (2Z,4E,7E)-2-hydroxy-6-oxonona-2,4,7-trienedioate + H(+). The protein operates within aromatic compound metabolism; 3-phenylpropanoate degradation. Its function is as follows. Catalyzes the non-heme iron(II)-dependent oxidative cleavage of 2,3-dihydroxyphenylpropionic acid and 2,3-dihydroxicinnamic acid into 2-hydroxy-6-ketononadienedioate and 2-hydroxy-6-ketononatrienedioate, respectively. The sequence is that of 2,3-dihydroxyphenylpropionate/2,3-dihydroxicinnamic acid 1,2-dioxygenase from Rhodococcus globerulus.